The following is a 197-amino-acid chain: Probable chorismate pyruvate-lyase (197 aa).

Residues arginine 77, leucine 115, and glutamate 176 each coordinate substrate.

The protein belongs to the UbiC family.

Its subcellular location is the cytoplasm. The enzyme catalyses chorismate = 4-hydroxybenzoate + pyruvate. It participates in cofactor biosynthesis; ubiquinone biosynthesis. Its function is as follows. Removes the pyruvyl group from chorismate, with concomitant aromatization of the ring, to provide 4-hydroxybenzoate (4HB) for the ubiquinone pathway. This Burkholderia ambifaria (strain ATCC BAA-244 / DSM 16087 / CCUG 44356 / LMG 19182 / AMMD) (Burkholderia cepacia (strain AMMD)) protein is Probable chorismate pyruvate-lyase.